The sequence spans 242 residues: Ribosomal RNA small subunit methyltransferase G (242 aa).

Residues G81, F86, 104–106 (DST), 132–133 (AE), and R151 contribute to the S-adenosyl-L-methionine site.

It belongs to the methyltransferase superfamily. RNA methyltransferase RsmG family.

Its subcellular location is the cytoplasm. Its function is as follows. Specifically methylates the N7 position of a guanine in 16S rRNA. The sequence is that of Ribosomal RNA small subunit methyltransferase G from Synechococcus elongatus (strain ATCC 33912 / PCC 7942 / FACHB-805) (Anacystis nidulans R2).